Here is a 558-residue protein sequence, read N- to C-terminus: Glucose-6-phosphate isomerase (558 aa).

N-acetylalanine is present on alanine 2. Lysine 12 carries the post-translational modification N6-acetyllysine. The residue at position 34 (lysine 34) is an N6-(2-hydroxyisobutyryl)lysine. Serine 107 carries the post-translational modification Phosphoserine. Position 109 is a phosphothreonine (threonine 109). An N6-acetyllysine modification is found at lysine 142. 159-160 (GS) lines the D-glucose 6-phosphate pocket. Serine 185 is subject to Phosphoserine; by CK2. 210 to 215 (SKTFTT) is a D-glucose 6-phosphate binding site. Threonine 250 is subject to Phosphothreonine. Residues glutamine 354, glutamate 358, and histidine 389 each contribute to the D-glucose 6-phosphate site. Residue glutamate 358 is the Proton donor of the active site. Histidine 389 is an active-site residue. N6-acetyllysine; alternate is present on lysine 454. Lysine 454 is modified (N6-malonyllysine; alternate). N6-succinyllysine; alternate is present on lysine 454. A Phosphoserine modification is found at serine 455. Lysine 519 contributes to the D-glucose 6-phosphate binding site. The active site involves lysine 519.

This sequence belongs to the GPI family. In terms of assembly, homodimer in the catalytically active form, monomer in the secreted form. In terms of processing, phosphorylation at Ser-185 by CK2 has been shown to decrease enzymatic activity and may contribute to secretion by a non-classical secretory pathway. Post-translationally, ISGylated.

The protein localises to the cytoplasm. It is found in the secreted. It carries out the reaction alpha-D-glucose 6-phosphate = beta-D-fructose 6-phosphate. Its pathway is carbohydrate degradation; glycolysis; D-glyceraldehyde 3-phosphate and glycerone phosphate from D-glucose: step 2/4. In terms of biological role, in the cytoplasm, catalyzes the conversion of glucose-6-phosphate to fructose-6-phosphate, the second step in glycolysis, and the reverse reaction during gluconeogenesis. Besides it's role as a glycolytic enzyme, also acts as a secreted cytokine: acts as an angiogenic factor (AMF) that stimulates endothelial cell motility. Acts as a neurotrophic factor, neuroleukin, for spinal and sensory neurons. It is secreted by lectin-stimulated T-cells and induces immunoglobulin secretion. This is Glucose-6-phosphate isomerase from Sus scrofa (Pig).